An 88-amino-acid chain; its full sequence is UPF0147 protein Ta0600 (88 aa).

It belongs to the UPF0147 family.

The sequence is that of UPF0147 protein Ta0600 from Thermoplasma acidophilum (strain ATCC 25905 / DSM 1728 / JCM 9062 / NBRC 15155 / AMRC-C165).